Reading from the N-terminus, the 512-residue chain is Opioid growth factor receptor-like protein 1 (512 aa).

Disordered stretches follow at residues 1–72 (MGNI…ETGT), 323–469 (IWGP…TCCK), and 488–512 (SLSP…GPFT). Composition is skewed to acidic residues over residues 28-54 (GGEE…DNEE) and 62-71 (TNEGGEEETG). Residues 328-337 (DKQKADENKA) show a composition bias toward basic and acidic residues. The segment covering 347–361 (QKKHSHVEKKSRPAK) has biased composition (basic residues). The span at 408 to 421 (TVTSENNSSKTGQT) shows a compositional bias: polar residues. Positions 449-468 (RSLDTEHDLKRPEADRETCC) are enriched in basic and acidic residues. Over residues 490–499 (SPGTSNSNVT) the composition is skewed to polar residues.

This sequence belongs to the opioid growth factor receptor family.

The chain is Opioid growth factor receptor-like protein 1 (ogfrl1) from Xenopus tropicalis (Western clawed frog).